Reading from the N-terminus, the 432-residue chain is Histidinol dehydrogenase (432 aa).

NAD(+) is bound by residues Y130, Q191, and N214. Substrate contacts are provided by S237, Q259, and H262. Positions 259 and 262 each coordinate Zn(2+). Catalysis depends on proton acceptor residues E327 and H328. Residues H328, D361, E415, and H420 each coordinate substrate. Residue D361 participates in Zn(2+) binding. H420 is a Zn(2+) binding site.

Belongs to the histidinol dehydrogenase family. Zn(2+) is required as a cofactor.

The enzyme catalyses L-histidinol + 2 NAD(+) + H2O = L-histidine + 2 NADH + 3 H(+). The protein operates within amino-acid biosynthesis; L-histidine biosynthesis; L-histidine from 5-phospho-alpha-D-ribose 1-diphosphate: step 9/9. In terms of biological role, catalyzes the sequential NAD-dependent oxidations of L-histidinol to L-histidinaldehyde and then to L-histidine. The sequence is that of Histidinol dehydrogenase from Agrobacterium fabrum (strain C58 / ATCC 33970) (Agrobacterium tumefaciens (strain C58)).